The sequence spans 52 residues: MEKVQYLTRSAIRRASTIEMPQQARQNLQNLFINFCLILICLLLICIIVMLL.

At Met-1 the chain carries N-acetylmethionine. Over 1 to 31 (MEKVQYLTRSAIRRASTIEMPQQARQNLQNL) the chain is Cytoplasmic. Ser-16 bears the Phosphoserine; by PKA mark. Thr-17 is subject to Phosphothreonine; by CaMK2. Residues 32-52 (FINFCLILICLLLICIIVMLL) form a helical membrane-spanning segment. A lipid anchor (S-palmitoyl cysteine) is attached at Cys-36.

The protein belongs to the phospholamban family. In terms of assembly, homopentamer. Can also form heterooligomers with other sarcoplasmic/endoplasmic reticulum calcium ATPase (SERCA) regulators ARLN, ERLN, SLN and STRIT1/DWORF. Monomer. Interacts with HAX1. Interacts as a monomer with ATP2A2; the interaction decreases ATP2A2 Ca(2+) affinity. Interacts with VMP1; VMP1 competes with PLN and SLN to prevent them from forming an inhibitory complex with ATP2A2. Interacts with S100A1 in a Ca(2+)-dependent manner. Phosphorylated at Thr-17 by CaMK2, and in response to beta-adrenergic stimulation. Phosphorylation by DMPK may stimulate sarcoplasmic reticulum calcium uptake in cardiomyocytes. Phosphorylation by PKA abolishes the inhibition of ATP2A2-mediated calcium uptake. Post-translationally, palmitoylated by ZDHHC16, promoting formation of the homopentamer. In terms of processing, in elongated spermatids, proteolytically cleaved by SPPL2C which modulates intracellular Ca(2+) homeostasis. Expressed in testis (at protein level). In brain, expressed specifically in GABAergic GAD67+ neurons of the thalamic reticular nucleus where it colocalizes with ATP2A2/SERCA2 (at protein level). Expressed in the bladder and in the atria and ventricles of the heart.

It is found in the endoplasmic reticulum membrane. It localises to the sarcoplasmic reticulum membrane. Its subcellular location is the mitochondrion membrane. The protein resides in the membrane. Functionally, reversibly inhibits the activity of ATP2A2/SERCA2 in cardiac sarcoplasmic reticulum by decreasing the apparent affinity of the ATPase for Ca(2+). Binds preferentially to the ATP-bound E1 conformational form of ATP2A2 which predominates at low Ca(2+) concentrations during the diastolic phase of the cardiac cycle. Inhibits ATP2A2 Ca(2+) affinity by disrupting its allosteric activation by ATP. Modulates the contractility of the heart muscle in response to physiological stimuli via its effects on ATP2A2. Modulates calcium re-uptake during muscle relaxation and plays an important role in calcium homeostasis in the heart muscle. The degree of ATP2A2 inhibition depends on the oligomeric state of PLN. ATP2A2 inhibition is alleviated by PLN phosphorylation. Also inhibits the activity of ATP2A3/SERCA3. Controls intracellular Ca(2+) levels in elongated spermatids and may play a role in germ cell differentiation. In the thalamic reticular nucleus of the brain, plays a role in the regulation of sleep patterns and executive functioning. The chain is Phospholamban from Mus musculus (Mouse).